We begin with the raw amino-acid sequence, 59 residues long: UPF0509 protein KPK_3153 (59 aa).

Belongs to the UPF0509 family.

In Klebsiella pneumoniae (strain 342), this protein is UPF0509 protein KPK_3153.